The following is a 300-amino-acid chain: 33 kDa chaperonin (300 aa).

Disulfide bonds link Cys-235–Cys-237 and Cys-269–Cys-272.

It belongs to the HSP33 family. Under oxidizing conditions two disulfide bonds are formed involving the reactive cysteines. Under reducing conditions zinc is bound to the reactive cysteines and the protein is inactive.

It localises to the cytoplasm. Functionally, redox regulated molecular chaperone. Protects both thermally unfolding and oxidatively damaged proteins from irreversible aggregation. Plays an important role in the bacterial defense system toward oxidative stress. The polypeptide is 33 kDa chaperonin (Pseudomonas savastanoi pv. phaseolicola (strain 1448A / Race 6) (Pseudomonas syringae pv. phaseolicola (strain 1448A / Race 6))).